We begin with the raw amino-acid sequence, 307 residues long: MGSTMEPPGGAYLHLGAVTSPVGTARVLQLAFGCTTFSLVAHRGGFAGVQGTFCMAAWGFCFAVSALVVACEFTRLHGCLRLSWGNFTAAFAMLATLLCATAAVLYPLYFARRECSPEPAGCAARDFRLAASVFAGLLFLAYAVEVALTRARPGQVSSYMATVSGLLKIVQAFVACIIFGALVHDSRYGRYVATQWCVAVYSLCFLATVAVVALSVMGHTGGLGCPFDRLVVVYTFLAVLLYLSAAVIWPVFCFDPKYGEPKRPPNCARGSCPWDSQLVVAIFTYVNLLLYVVDLAYSQRIRFVPSL.

MARVEL domains follow at residues 17–154 (AVTS…ARPG) and 159–303 (YMAT…RIRF). The next 7 membrane-spanning stretches (helical) occupy residues 53 to 73 (FCMAAWGFCFAVSALVVACEF), 90 to 110 (AFAMLATLLCATAAVLYPLYF), 129 to 149 (LAASVFAGLLFLAYAVEVALT), 163 to 183 (VSGLLKIVQAFVACIIFGALV), 198 to 218 (VAVYSLCFLATVAVVALSVMG), 229 to 249 (RLVVVYTFLAVLLYLSAAVIW), and 278 to 298 (LVVAIFTYVNLLLYVVDLAYS).

This sequence belongs to the MAL family.

The protein resides in the membrane. The sequence is that of Myeloid-associated differentiation marker-like protein 2 (MYADML2) from Homo sapiens (Human).